A 495-amino-acid chain; its full sequence is Probable leucine aminopeptidase 2 (495 aa).

An N-terminal signal peptide occupies residues 1 to 21 (MKSQLLSLAVAVTTISQGVVG). One can recognise a PA domain in the interval 130-216 (MAELVVAKNN…SQEDGKNLAT (87 aa)). N-linked (GlcNAc...) asparagine glycosylation is found at Asn-142 and Asn-235. Zn(2+)-binding residues include His-259 and Asp-271. A glycan (N-linked (GlcNAc...) asparagine) is linked at Asn-272. Glu-303 (proton acceptor) is an active-site residue. Zn(2+) contacts are provided by Glu-304 and Asp-332. Asn-352 carries N-linked (GlcNAc...) asparagine glycosylation. Position 430 (His-430) interacts with Zn(2+).

The protein belongs to the peptidase M28 family. M28A subfamily. Monomer. Zn(2+) is required as a cofactor.

It localises to the secreted. Extracellular aminopeptidase that releases a wide variety of amino acids from natural peptides and contributes to pathogenicity. In Arthroderma benhamiae (strain ATCC MYA-4681 / CBS 112371) (Trichophyton mentagrophytes), this protein is Probable leucine aminopeptidase 2 (LAP2).